A 449-amino-acid polypeptide reads, in one-letter code: MWTALVLIWIFSLSLSESHAASNDPRNFVPNKMWKGLVKRNASVETVDNKTSEDVTMAAASPVTLTKGTSAAHLNSMEVTTEDTSRTDVSEPATSGGAADGVTSIAPTAVASSTTAASITTAASSMTVASSAPTTAASSTTVASIAPTTAASSMTAASSTPMTLALPAPTSTSTGRTPSTTATGHPSLSTALAQVPKSSALPRTATLATLATRAQTVATTANTSSPMSTRPSPSKHMPSDTAASPVPPMRPQAQGPISQVSVDQPVVNTTNKSTPMPSNTTPEPAPTPTVVTTTKAQAREPTASPVPVPHTSPIPEMEAMSPTTQPSPMPYTQRAAGPGTSQAPEQVETEATPGTDSTGPTPRSSGGTKMPATDSCQPSTQGQYMVVTTEPLTQAVVDKTLLLVVLLLGVTLFITVLVLFALQAYESYKKKDYTQVDYLINGMYADSEM.

Positions methionine 1–alanine 20 are cleaved as a signal peptide. The Extracellular portion of the chain corresponds to alanine 21–threonine 400. Asparagine 49 carries N-linked (GlcNAc...) asparagine glycosylation. Disordered regions lie at residues alanine 72–glycine 101, methionine 154–serine 187, and glutamine 215–glutamine 381. Composition is skewed to low complexity over residues methionine 154–glycine 184 and glutamine 215–serine 234. Composition is skewed to polar residues over residues glycine 255–asparagine 279 and threonine 352–glycine 367. The chain crosses the membrane as a helical span at residues leucine 401–alanine 421. The Cytoplasmic segment spans residues leucine 422 to methionine 449.

In terms of tissue distribution, highest expression in heart, placenta, liver, pancreas and colon. Also detected in brain, lung, skeletal muscle, kidney, spleen, prostate, testis, ovary and small intestine. Lowest expression in thymus and leukocytes.

It localises to the cell membrane. The protein localises to the golgi apparatus. It is found in the trans-Golgi network membrane. This is an uncharacterized protein from Homo sapiens (Human).